Here is a 201-residue protein sequence, read N- to C-terminus: Recombination protein RecR (201 aa).

The C4-type zinc finger occupies 60–75 (CRSCGNVDTSDPCTIC). One can recognise a Toprim domain in the interval 83–178 (TTLVVVEDVS…TVTRLAHGVP (96 aa)).

This sequence belongs to the RecR family.

Its function is as follows. May play a role in DNA repair. It seems to be involved in an RecBC-independent recombinational process of DNA repair. It may act with RecF and RecO. The chain is Recombination protein RecR from Methylorubrum extorquens (strain CM4 / NCIMB 13688) (Methylobacterium extorquens).